Consider the following 465-residue polypeptide: Ribulose bisphosphate carboxylase large chain (465 aa).

The residue at position 4 (K4) is an N6,N6,N6-trimethyllysine. Residues N113 and T163 each coordinate substrate. K165 serves as the catalytic Proton acceptor. Residue K167 coordinates substrate. Residues K191, D193, and E194 each coordinate Mg(2+). The residue at position 191 (K191) is an N6-carboxylysine. The Proton acceptor role is filled by H284. Substrate is bound by residues R285, H317, and S369.

Belongs to the RuBisCO large chain family. Type I subfamily. As to quaternary structure, heterohexadecamer of 8 large chains and 8 small chains; disulfide-linked. The disulfide link is formed within the large subunit homodimers. Mg(2+) serves as cofactor. The disulfide bond which can form in the large chain dimeric partners within the hexadecamer appears to be associated with oxidative stress and protein turnover.

It localises to the plastid. Its subcellular location is the chloroplast. The enzyme catalyses 2 (2R)-3-phosphoglycerate + 2 H(+) = D-ribulose 1,5-bisphosphate + CO2 + H2O. It carries out the reaction D-ribulose 1,5-bisphosphate + O2 = 2-phosphoglycolate + (2R)-3-phosphoglycerate + 2 H(+). In terms of biological role, ruBisCO catalyzes two reactions: the carboxylation of D-ribulose 1,5-bisphosphate, the primary event in carbon dioxide fixation, as well as the oxidative fragmentation of the pentose substrate in the photorespiration process. Both reactions occur simultaneously and in competition at the same active site. The protein is Ribulose bisphosphate carboxylase large chain of Epacris sp.